The following is a 345-amino-acid chain: Transcription initiation factor IIB (345 aa).

The segment at 8 to 40 (VGRNCPHCSAVDSLQTDDVMGEVACTACALVVA) adopts a TFIIB-type zinc-finger fold. 4 residues coordinate Zn(2+): Cys-12, Cys-15, Cys-32, and Cys-35. Disordered stretches follow at residues 59 to 89 (DVDH…HMSS) and 318 to 345 (PTAG…REET). A compositionally biased stretch (low complexity) spans 71 to 83 (TAATSAAGSLSAA).

This sequence belongs to the TFIIB family. Monomer. Interacts with RNA polymerase II subunits RPB1 and RPB2. Interacts with TBP; the interaction is direct.

The protein resides in the nucleus. In terms of biological role, specifically binds to the promoter of the spliced leader (SL) RNA gene and thus is essential for SLRNA transcription. The protein is Transcription initiation factor IIB of Trypanosoma brucei brucei.